The following is a 173-amino-acid chain: C-type lectin mosGCTL-7 (173 aa).

Residues 1–24 form the signal peptide; sequence MVVGWSLLGWALSWLAVATVVVSA. In terms of domain architecture, C-type lectin spans 51–167; sequence NWFKATEYCH…CWDEYYFVCE (117 aa). 2 cysteine pairs are disulfide-bonded: Cys59/Cys166 and Cys139/Cys158. 2 N-linked (GlcNAc...) asparagine glycosylation sites follow: Asn119 and Asn144.

In terms of assembly, interacts with putative receptor-type tyrosine-protein phosphatase mosPTP-1; the interaction may mediate the recruitment of Japanese encephalitis virus particles in complex with C-type lectin mosGCTL-7 to the cell surface.

It localises to the secreted. Functionally, carbohydrate-binding protein. Its function is as follows. (Microbial infection) Facilitates Japanese encephalitis virus infection in mosquitoes. The chain is C-type lectin mosGCTL-7 from Culex quinquefasciatus (Southern house mosquito).